Consider the following 396-residue polypeptide: Elongation factor Tu (396 aa).

The 197-residue stretch at 10–206 (KPHVNVGTIG…TMDSYIPEPV (197 aa)) folds into the tr-type G domain. The segment at 19–26 (GHVDHGKT) is G1. 19-26 (GHVDHGKT) serves as a coordination point for GTP. Threonine 26 lines the Mg(2+) pocket. The G2 stretch occupies residues 60 to 64 (GITIS). Residues 81–84 (DCPG) are G3. GTP is bound by residues 81 to 85 (DCPGH) and 136 to 139 (NKAD). Residues 136–139 (NKAD) are G4. Residues 174–176 (SAL) form a G5 region.

It belongs to the TRAFAC class translation factor GTPase superfamily. Classic translation factor GTPase family. EF-Tu/EF-1A subfamily. As to quaternary structure, monomer.

The protein resides in the cytoplasm. The enzyme catalyses GTP + H2O = GDP + phosphate + H(+). Functionally, GTP hydrolase that promotes the GTP-dependent binding of aminoacyl-tRNA to the A-site of ribosomes during protein biosynthesis. In Legionella pneumophila (strain Lens), this protein is Elongation factor Tu.